Here is a 659-residue protein sequence, read N- to C-terminus: MVKRRLSAFGNAFLIYFIIFRLCCCSPQTSHWCKYPALCLKSPDTHNENLVCDAYLSVIATKSEEKEASNPTTWDFTPTNKYQEPSFHTKTSLNGSDTISSNFLSKYEYSNGTSTSEFIDSISPPLVNETSTISSSKKLEQNYSVTEVIDTNIITSSSVTLPISEDGSSTSAAATIDSNIDEKTVAFSEEKRFNFASTDCAAAVIKTNPEAVGSSSILTENKDKYMLNKCSAENKFVVIELCEDIYVDTVQIANFEFFSSIFRDFKVSVSGKYPKYESSWMELGTFTALNLRTLQSFHIENPLIWAKYLKIEFLTHYGSEFYCPVSLLRVYGKTMIEEFEEANEDFLEQKVNDGSAIKADEIRKPQESPIFVDEEDTDVQSKPVRKNPSVELNSTDTLLSSTVISKSLSTVVIGNETGKSESYPATSTRSFNDISPSSSSSYSTAQISTFPSNQESIYKNINKRLSTLEERKKAFDEIVEKILTNYGKHNAKNMNFTQLLHELNSTLQLEISKLSKSVVKPSLFALQAKLELLSAENEYFQSQITSLYQESSFQKRLLMLQLTVLIVLTVYMAVSRLPENLPTTRSSSNNPIEASRPPFSRDEQDISKANDFRVSASSAVYTVGPELLQRKKRDPNTSIRSIHEREQDKIIHSRSHSVC.

An N-terminal signal peptide occupies residues 1–25 (MVKRRLSAFGNAFLIYFIIFRLCCC). The Lumenal segment spans residues 26-556 (SPQTSHWCKY…LYQESSFQKR (531 aa)). N-linked (GlcNAc...) asparagine glycans are attached at residues Asn-94, Asn-111, Asn-128, and Asn-142. Residues 173–335 (AATIDSNIDE…SLLRVYGKTM (163 aa)) enclose the SUN domain. N-linked (GlcNAc...) asparagine glycans are attached at residues Asn-393 and Asn-415. Residues 417 to 445 (TGKSESYPATSTRSFNDISPSSSSSYSTA) form a disordered region. Residues 423–434 (YPATSTRSFNDI) show a composition bias toward polar residues. N-linked (GlcNAc...) asparagine glycosylation is found at Asn-495 and Asn-504. Residues 557–574 (LLMLQLTVLIVLTVYMAV) traverse the membrane as a helical segment. The Cytoplasmic portion of the chain corresponds to 575 to 659 (SRLPENLPTT…IIHSRSHSVC (85 aa)). Disordered regions lie at residues 580 to 603 (NLPTTRSSSNNPIEASRPPFSRDE) and 632 to 659 (KRDPNTSIRSIHEREQDKIIHSRSHSVC). Positions 581–592 (LPTTRSSSNNPI) are enriched in polar residues. A compositionally biased stretch (basic and acidic residues) spans 641 to 651 (SIHEREQDKII).

Belongs to the SLP1 family. Interacts with EMP65.

Its subcellular location is the endoplasmic reticulum membrane. Its function is as follows. May be involved in membrane protein folding. This is an uncharacterized protein from Schizosaccharomyces pombe (strain 972 / ATCC 24843) (Fission yeast).